The following is a 416-amino-acid chain: Cell division protein FtsZ (416 aa).

GTP-binding positions include Gly20–Asn24, Gly107–Gly109, Glu138, Arg142, and Asp186. The span at Gln319–Ser335 shows a compositional bias: polar residues. A disordered region spans residues Gln319–Lys416. Positions Gln376–Ala392 are enriched in acidic residues. The span at Ala404 to Lys416 shows a compositional bias: basic and acidic residues.

The protein belongs to the FtsZ family. In terms of assembly, homodimer. Polymerizes to form a dynamic ring structure in a strictly GTP-dependent manner. Interacts directly with several other division proteins.

It localises to the cytoplasm. In terms of biological role, essential cell division protein that forms a contractile ring structure (Z ring) at the future cell division site. The regulation of the ring assembly controls the timing and the location of cell division. One of the functions of the FtsZ ring is to recruit other cell division proteins to the septum to produce a new cell wall between the dividing cells. Binds GTP and shows GTPase activity. This chain is Cell division protein FtsZ, found in Kocuria rhizophila (strain ATCC 9341 / DSM 348 / NBRC 103217 / DC2201).